The following is a 257-amino-acid chain: NAD-capped RNA hydrolase NudC (257 aa).

Arginine 69 provides a ligand contact to substrate. 2 residues coordinate Zn(2+): cysteine 98 and cysteine 101. Residue glutamate 111 coordinates substrate. Residues cysteine 116 and cysteine 119 each coordinate Zn(2+). A substrate-binding site is contributed by tyrosine 124. A Nudix hydrolase domain is found at 125–248 (PQIAPCIIVA…TVARRLIEDT (124 aa)). Positions 158, 174, and 178 each coordinate a divalent metal cation. A Nudix box motif is present at residues 159 to 180 (GFVEVGETLEQAVAREVMEESG). 192-199 (QPWPFPQS) contacts substrate. Glutamate 219 provides a ligand contact to a divalent metal cation. Position 241 (alanine 241) interacts with substrate.

The protein belongs to the Nudix hydrolase family. NudC subfamily. As to quaternary structure, homodimer. The cofactor is Mg(2+). Mn(2+) serves as cofactor. Requires Zn(2+) as cofactor.

It carries out the reaction a 5'-end NAD(+)-phospho-ribonucleoside in mRNA + H2O = a 5'-end phospho-adenosine-phospho-ribonucleoside in mRNA + beta-nicotinamide D-ribonucleotide + 2 H(+). The catalysed reaction is NAD(+) + H2O = beta-nicotinamide D-ribonucleotide + AMP + 2 H(+). It catalyses the reaction NADH + H2O = reduced beta-nicotinamide D-ribonucleotide + AMP + 2 H(+). MRNA decapping enzyme that specifically removes the nicotinamide adenine dinucleotide (NAD) cap from a subset of mRNAs by hydrolyzing the diphosphate linkage to produce nicotinamide mononucleotide (NMN) and 5' monophosphate mRNA. The NAD-cap is present at the 5'-end of some mRNAs and stabilizes RNA against 5'-processing. Has preference for mRNAs with a 5'-end purine. Catalyzes the hydrolysis of a broad range of dinucleotide pyrophosphates. This chain is NAD-capped RNA hydrolase NudC, found in Salmonella dublin (strain CT_02021853).